The chain runs to 142 residues: FAD synthase (142 aa).

Residues 9–10 (TF), 14–17 (HPGH), and Asp-92 contribute to the ATP site.

It belongs to the archaeal FAD synthase family. As to quaternary structure, homodimer. Requires a divalent metal cation as cofactor.

The catalysed reaction is FMN + ATP + H(+) = FAD + diphosphate. It functions in the pathway cofactor biosynthesis; FAD biosynthesis; FAD from FMN: step 1/1. Functionally, catalyzes the transfer of the AMP portion of ATP to flavin mononucleotide (FMN) to produce flavin adenine dinucleotide (FAD) coenzyme. This is FAD synthase from Halalkalicoccus jeotgali (strain DSM 18796 / CECT 7217 / JCM 14584 / KCTC 4019 / B3).